A 626-amino-acid polypeptide reads, in one-letter code: Chaperone protein DnaK (626 aa).

The residue at position 197 (Thr-197) is a Phosphothreonine; by autocatalysis. Low complexity predominate over residues 598–612 (AQGEQGQAAQPQAET). Residues 598–626 (AQGEQGQAAQPQAETQGDDVQDVEFEEVK) form a disordered region. The segment covering 613 to 626 (QGDDVQDVEFEEVK) has biased composition (acidic residues).

This sequence belongs to the heat shock protein 70 family.

In terms of biological role, acts as a chaperone. The sequence is that of Chaperone protein DnaK from Flavobacterium psychrophilum (strain ATCC 49511 / DSM 21280 / CIP 103535 / JIP02/86).